Consider the following 453-residue polypeptide: Transmembrane protease serine 3 (453 aa).

The Cytoplasmic portion of the chain corresponds to 1-48 (MGENDPPAAEAPFSFRSLFGLDDLKISPVAPDGDAVAAQILSLLPLKF). Residues 49-69 (FPIIVIGIIALILALAIGLGI) traverse the membrane as a helical; Signal-anchor for type II membrane protein segment. Residues 70–453 (HFDCSGKYRC…HEQLERDLKT (384 aa)) lie on the Extracellular side of the membrane. In terms of domain architecture, LDL-receptor class A spans 72 to 108 (DCSGKYRCHSSFKCIELTARCDGVSDCKNAEDEYRCV). 10 disulfide bridges follow: C73–C85, C79–C98, C92–C107, C129–C194, C142–C204, C207–C324, C242–C258, C338–C406, C369–C385, and C396–C424. Positions 104–205 (EYRCVRVSGQ…SGHVVTLKCS (102 aa)) constitute an SRCR domain. In terms of domain architecture, Peptidase S1 spans 217-448 (IVGGNMSSLT…FLDWIHEQLE (232 aa)). N-linked (GlcNAc...) asparagine glycosylation is present at N221. Residues H257 and D304 each act as charge relay system in the active site. S400 functions as the Charge relay system in the catalytic mechanism.

It belongs to the peptidase S1 family. Undergoes autoproteolytic activation. As to expression, strongly expressed in liver, cochlea, brain, cerebellum, spleen, lung, and muscle and at a lower degree in retina, kidney, and heart. Expressed in the spiral ganglion, the cells supporting the organ of Corti and the stria vascularis. Isoform 2 is strongly expressed only in the cochlea with very faint expression in the cerebellum, spleen and muscle.

Its subcellular location is the endoplasmic reticulum membrane. Functionally, probable serine protease that plays a role in hearing. Acts as a permissive factor for cochlear hair cell survival and activation at the onset of hearing and is required for saccular hair cell survival. Activates ENaC (in vitro). The polypeptide is Transmembrane protease serine 3 (Tmprss3) (Mus musculus (Mouse)).